Reading from the N-terminus, the 280-residue chain is Ribosomal RNA-processing protein 7 homolog A (280 aa).

Residues Arg59–Tyr159 form the RRM domain. At Ser99 the chain carries Phosphoserine.

This sequence belongs to the RRP7 family. Part of the small subunit (SSU) processome, composed of more than 70 proteins and the RNA chaperone small nucleolar RNA (snoRNA) U3. Interacts with NOL6; required for NOL6 localization to nucleolus. Expressed in the apical radial glial cells in the developing brain.

It localises to the nucleus. The protein localises to the nucleolus. The protein resides in the cell projection. Its subcellular location is the cilium. It is found in the cytoplasm. It localises to the cytoskeleton. The protein localises to the microtubule organizing center. The protein resides in the centrosome. Nucleolar protein that is involved in ribosomal RNA (rRNA) processing. Also plays a role in primary cilia resorption, and cell cycle progression in neurogenesis and neocortex development. Part of the small subunit (SSU) processome, first precursor of the small eukaryotic ribosomal subunit. During the assembly of the SSU processome in the nucleolus, many ribosome biogenesis factors, an RNA chaperone and ribosomal proteins associate with the nascent pre-rRNA and work in concert to generate RNA folding, modifications, rearrangements and cleavage as well as targeted degradation of pre-ribosomal RNA by the RNA exosome. This chain is Ribosomal RNA-processing protein 7 homolog A, found in Homo sapiens (Human).